Reading from the N-terminus, the 101-residue chain is MAKTSAVEKNKRREKLVKRHAVKRARLKAIVMDQGLPLEERFRATIRLAELPRNSAKVRIRNRCEVSGRPRGYYRKLKMSRIALRQLGSLGQIPGVVKSSW.

The protein belongs to the universal ribosomal protein uS14 family. As to quaternary structure, part of the 30S ribosomal subunit. Contacts proteins S3 and S10.

In terms of biological role, binds 16S rRNA, required for the assembly of 30S particles and may also be responsible for determining the conformation of the 16S rRNA at the A site. The sequence is that of Small ribosomal subunit protein uS14 from Brucella abortus (strain S19).